Here is a 321-residue protein sequence, read N- to C-terminus: Nod factor export ATP-binding protein I (321 aa).

The region spanning 17 to 247 is the ABC transporter domain; it reads LSVEGLRKRY…EIGCDVVEVY (231 aa). 49–56 is an ATP binding site; that stretch reads GPNGAGKT.

It belongs to the ABC transporter superfamily. Lipooligosaccharide exporter (TC 3.A.1.102) family. The complex is composed of two ATP-binding proteins (NodI) and two transmembrane proteins (NodJ).

It is found in the cell inner membrane. Its function is as follows. Part of the ABC transporter complex NodIJ involved in the export of the nodulation factors (Nod factors), the bacterial signal molecules that induce symbiosis and subsequent nodulation induction. Nod factors are LCO (lipo-chitin oligosaccharide), a modified beta-1,4-linked N-acetylglucosamine oligosaccharide. This subunit is responsible for energy coupling to the transport system. The polypeptide is Nod factor export ATP-binding protein I (Ralstonia nicotianae (strain ATCC BAA-1114 / GMI1000) (Ralstonia solanacearum)).